The sequence spans 155 residues: 2-C-methyl-D-erythritol 2,4-cyclodiphosphate synthase (155 aa).

Residues aspartate 8 and histidine 10 each coordinate a divalent metal cation. 4-CDP-2-C-methyl-D-erythritol 2-phosphate-binding positions include 8 to 10 and 34 to 35; these read DVH and HS. Histidine 42 lines the a divalent metal cation pocket. Residues 56 to 58, 61 to 65, 100 to 106, 132 to 135, phenylalanine 139, and lysine 142 contribute to the 4-CDP-2-C-methyl-D-erythritol 2-phosphate site; these read DIG, FPDSD, AQKPKML, and TTEE.

The protein belongs to the IspF family. As to quaternary structure, homotrimer. It depends on a divalent metal cation as a cofactor.

The enzyme catalyses 4-CDP-2-C-methyl-D-erythritol 2-phosphate = 2-C-methyl-D-erythritol 2,4-cyclic diphosphate + CMP. Its pathway is isoprenoid biosynthesis; isopentenyl diphosphate biosynthesis via DXP pathway; isopentenyl diphosphate from 1-deoxy-D-xylulose 5-phosphate: step 4/6. Involved in the biosynthesis of isopentenyl diphosphate (IPP) and dimethylallyl diphosphate (DMAPP), two major building blocks of isoprenoid compounds. Catalyzes the conversion of 4-diphosphocytidyl-2-C-methyl-D-erythritol 2-phosphate (CDP-ME2P) to 2-C-methyl-D-erythritol 2,4-cyclodiphosphate (ME-CPP) with a corresponding release of cytidine 5-monophosphate (CMP). The chain is 2-C-methyl-D-erythritol 2,4-cyclodiphosphate synthase from Clostridium botulinum (strain 657 / Type Ba4).